We begin with the raw amino-acid sequence, 241 residues long: ATP synthase subunit a (241 aa).

5 consecutive transmembrane segments (helical) span residues 30–50, 91–111, 128–148, 193–213, and 214–234; these read GQVF…VVVG, FIGT…LVPW, INTT…AGLS, LVVA…VMFL, and GLFT…YYIG.

The protein belongs to the ATPase A chain family. In terms of assembly, F-type ATPases have 2 components, CF(1) - the catalytic core - and CF(0) - the membrane proton channel. CF(1) has five subunits: alpha(3), beta(3), gamma(1), delta(1), epsilon(1). CF(0) has four main subunits: a, b, b' and c.

The protein localises to the cellular thylakoid membrane. In terms of biological role, key component of the proton channel; it plays a direct role in the translocation of protons across the membrane. The protein is ATP synthase subunit a of Prochlorococcus marinus (strain MIT 9211).